A 178-amino-acid chain; its full sequence is ATP synthase subunit delta (178 aa).

This sequence belongs to the ATPase delta chain family. F-type ATPases have 2 components, F(1) - the catalytic core - and F(0) - the membrane proton channel. F(1) has five subunits: alpha(3), beta(3), gamma(1), delta(1), epsilon(1). F(0) has three main subunits: a(1), b(2) and c(10-14). The alpha and beta chains form an alternating ring which encloses part of the gamma chain. F(1) is attached to F(0) by a central stalk formed by the gamma and epsilon chains, while a peripheral stalk is formed by the delta and b chains.

Its subcellular location is the cell inner membrane. F(1)F(0) ATP synthase produces ATP from ADP in the presence of a proton or sodium gradient. F-type ATPases consist of two structural domains, F(1) containing the extramembraneous catalytic core and F(0) containing the membrane proton channel, linked together by a central stalk and a peripheral stalk. During catalysis, ATP synthesis in the catalytic domain of F(1) is coupled via a rotary mechanism of the central stalk subunits to proton translocation. Functionally, this protein is part of the stalk that links CF(0) to CF(1). It either transmits conformational changes from CF(0) to CF(1) or is implicated in proton conduction. In Chromohalobacter salexigens (strain ATCC BAA-138 / DSM 3043 / CIP 106854 / NCIMB 13768 / 1H11), this protein is ATP synthase subunit delta.